Consider the following 198-residue polypeptide: FMN-dependent NADH:quinone oxidoreductase (198 aa).

FMN is bound by residues Ser-10 and 16-18 (SIS).

It belongs to the azoreductase type 1 family. Homodimer. The cofactor is FMN.

It catalyses the reaction 2 a quinone + NADH + H(+) = 2 a 1,4-benzosemiquinone + NAD(+). It carries out the reaction N,N-dimethyl-1,4-phenylenediamine + anthranilate + 2 NAD(+) = 2-(4-dimethylaminophenyl)diazenylbenzoate + 2 NADH + 2 H(+). Quinone reductase that provides resistance to thiol-specific stress caused by electrophilic quinones. Functionally, also exhibits azoreductase activity. Catalyzes the reductive cleavage of the azo bond in aromatic azo compounds to the corresponding amines. This Mycoplasmopsis pulmonis (strain UAB CTIP) (Mycoplasma pulmonis) protein is FMN-dependent NADH:quinone oxidoreductase.